The primary structure comprises 663 residues: Bifunctional polymyxin resistance protein ArnA (663 aa).

Positions 1 to 307 (MSPKAVVFAY…EFGLVEGSQL (307 aa)) are formyltransferase ArnAFT. The active-site Proton donor; for formyltransferase activity is the His-106. Residues Arg-116 and 138–142 (VKRAD) contribute to the (6R)-10-formyltetrahydrofolate site. Residues 317–663 (RRTRVLILGV…EAMAEKADMR (347 aa)) are dehydrogenase ArnADH. NAD(+)-binding positions include Asp-350 and 371 to 372 (DI). Residues Ala-396, Tyr-401, and 435 to 436 (TS) contribute to the UDP-alpha-D-glucuronate site. The active-site Proton acceptor; for decarboxylase activity is Glu-437. UDP-alpha-D-glucuronate is bound by residues Arg-463, Asn-494, 528–537 (RLVDGGAQKR), and Tyr-615. Residue Arg-621 is the Proton donor; for decarboxylase activity of the active site.

The protein in the N-terminal section; belongs to the Fmt family. UDP-L-Ara4N formyltransferase subfamily. It in the C-terminal section; belongs to the NAD(P)-dependent epimerase/dehydratase family. UDP-glucuronic acid decarboxylase subfamily. Homohexamer, formed by a dimer of trimers.

It carries out the reaction UDP-alpha-D-glucuronate + NAD(+) = UDP-beta-L-threo-pentopyranos-4-ulose + CO2 + NADH. The catalysed reaction is UDP-4-amino-4-deoxy-beta-L-arabinose + (6R)-10-formyltetrahydrofolate = UDP-4-deoxy-4-formamido-beta-L-arabinose + (6S)-5,6,7,8-tetrahydrofolate + H(+). The protein operates within nucleotide-sugar biosynthesis; UDP-4-deoxy-4-formamido-beta-L-arabinose biosynthesis; UDP-4-deoxy-4-formamido-beta-L-arabinose from UDP-alpha-D-glucuronate: step 1/3. It participates in nucleotide-sugar biosynthesis; UDP-4-deoxy-4-formamido-beta-L-arabinose biosynthesis; UDP-4-deoxy-4-formamido-beta-L-arabinose from UDP-alpha-D-glucuronate: step 3/3. It functions in the pathway bacterial outer membrane biogenesis; lipopolysaccharide biosynthesis. Functionally, bifunctional enzyme that catalyzes the oxidative decarboxylation of UDP-glucuronic acid (UDP-GlcUA) to UDP-4-keto-arabinose (UDP-Ara4O) and the addition of a formyl group to UDP-4-amino-4-deoxy-L-arabinose (UDP-L-Ara4N) to form UDP-L-4-formamido-arabinose (UDP-L-Ara4FN). The modified arabinose is attached to lipid A and is required for resistance to polymyxin and cationic antimicrobial peptides. The sequence is that of Bifunctional polymyxin resistance protein ArnA from Pseudomonas savastanoi pv. phaseolicola (strain 1448A / Race 6) (Pseudomonas syringae pv. phaseolicola (strain 1448A / Race 6)).